The sequence spans 420 residues: Serine/threonine-protein kinase PCRK2 (420 aa).

Residues 1 to 64 are disordered; sequence MKCFLFPLGD…SNTSMSAREN (64 aa). The span at 22-36 shows a compositional bias: polar residues; the sequence is SPTSNFSDVNKSGSD. A compositionally biased stretch (low complexity) spans 42–58; sequence VSGTSTVSSTGRNSNTS. At Thr-70 the chain carries Phosphothreonine. The Protein kinase domain occupies 81-366; it reads FSRSGMIGEG…EVLEMVTKIV (286 aa). Residues 87 to 95 and Lys-115 contribute to the ATP site; that span reads IGEGGFGCV. Tyr-164 bears the Phosphotyrosine mark. Catalysis depends on Asp-215, which acts as the Proton acceptor. Ser-219 and Ser-249 each carry phosphoserine. Residues Thr-250 and Thr-255 each carry the phosphothreonine modification. Position 263 is a phosphotyrosine (Tyr-263). A disordered region spans residues 369–396; the sequence is SSPGNGGKKPQLVPLKSQETSRVEEGKN. Residues 387–396 are compositionally biased toward basic and acidic residues; it reads ETSRVEEGKN.

Belongs to the protein kinase superfamily. Ser/Thr protein kinase family. Interacts with FLS2.

The protein localises to the cell membrane. The enzyme catalyses L-seryl-[protein] + ATP = O-phospho-L-seryl-[protein] + ADP + H(+). The catalysed reaction is L-threonyl-[protein] + ATP = O-phospho-L-threonyl-[protein] + ADP + H(+). Its function is as follows. Functions redundantly with PCRK1 in basal resistance against bacterial pathogens and in regulation of plant immunity. Functions together with PCRK1 downstream of the pathogen-associated molecular pattern (PAMP) receptor FLS2. Contributes to the induction of SARD1 and CBP60G, which are transcriptional activator of ICS1, an enzyme involved in salicylate (SA) biosynthesis upon pathogen attack. This Arabidopsis thaliana (Mouse-ear cress) protein is Serine/threonine-protein kinase PCRK2.